Consider the following 190-residue polypeptide: Pyridoxal 5'-phosphate synthase subunit PdxT (190 aa).

46-48 lines the L-glutamine pocket; it reads GES. Cys78 (nucleophile) is an active-site residue. L-glutamine-binding positions include Arg105 and 133–134; that span reads IR. Catalysis depends on charge relay system residues His169 and Glu171.

It belongs to the glutaminase PdxT/SNO family. As to quaternary structure, in the presence of PdxS, forms a dodecamer of heterodimers. Only shows activity in the heterodimer.

It catalyses the reaction aldehydo-D-ribose 5-phosphate + D-glyceraldehyde 3-phosphate + L-glutamine = pyridoxal 5'-phosphate + L-glutamate + phosphate + 3 H2O + H(+). The enzyme catalyses L-glutamine + H2O = L-glutamate + NH4(+). It functions in the pathway cofactor biosynthesis; pyridoxal 5'-phosphate biosynthesis. Functionally, catalyzes the hydrolysis of glutamine to glutamate and ammonia as part of the biosynthesis of pyridoxal 5'-phosphate. The resulting ammonia molecule is channeled to the active site of PdxS. In Niallia circulans (Bacillus circulans), this protein is Pyridoxal 5'-phosphate synthase subunit PdxT.